The sequence spans 645 residues: Translation factor GUF1, mitochondrial (645 aa).

The 185-residue stretch at 44-228 folds into the tr-type G domain; the sequence is ENYRNFSIVA…AIIDRIPPPT (185 aa). GTP is bound by residues 53 to 60, 120 to 124, and 174 to 177; these read AHVDHGKS, DTPGH, and NKID.

Belongs to the TRAFAC class translation factor GTPase superfamily. Classic translation factor GTPase family. LepA subfamily.

The protein localises to the mitochondrion inner membrane. It catalyses the reaction GTP + H2O = GDP + phosphate + H(+). In terms of biological role, promotes mitochondrial protein synthesis. May act as a fidelity factor of the translation reaction, by catalyzing a one-codon backward translocation of tRNAs on improperly translocated ribosomes. Binds to mitochondrial ribosomes in a GTP-dependent manner. The chain is Translation factor GUF1, mitochondrial from Saccharomyces cerevisiae (strain RM11-1a) (Baker's yeast).